A 247-amino-acid chain; its full sequence is Coproheme decarboxylase (247 aa).

Fe-coproporphyrin III-binding positions include Arg129, 143-147 (YPMDK), His170, Gln183, and Ser221. The active site involves Tyr143.

This sequence belongs to the ChdC family. Type 1 subfamily. Requires Fe-coproporphyrin III as cofactor.

The catalysed reaction is Fe-coproporphyrin III + 2 H2O2 + 2 H(+) = heme b + 2 CO2 + 4 H2O. It catalyses the reaction Fe-coproporphyrin III + H2O2 + H(+) = harderoheme III + CO2 + 2 H2O. It carries out the reaction harderoheme III + H2O2 + H(+) = heme b + CO2 + 2 H2O. It participates in porphyrin-containing compound metabolism; protoheme biosynthesis. In terms of biological role, involved in coproporphyrin-dependent heme b biosynthesis. Catalyzes the decarboxylation of Fe-coproporphyrin III (coproheme) to heme b (protoheme IX), the last step of the pathway. The reaction occurs in a stepwise manner with a three-propionate intermediate. This chain is Coproheme decarboxylase, found in Bacillus cytotoxicus (strain DSM 22905 / CIP 110041 / 391-98 / NVH 391-98).